A 493-amino-acid chain; its full sequence is Dipeptide permease D (493 aa).

13 helical membrane passes run 14–34, 49–69, 91–111, 138–158, 167–187, 212–232, 235–255, 267–287, 312–332, 344–364, 379–399, 413–433, and 458–478; these read VVAL…LLIL, ELFS…GYLA, LVLG…AIIV, GGFS…PIAC, WAMG…IFLC, NWGW…VLFW, WSVY…AKIY, LGLI…AQQG, MFQS…AWLV, IWGK…ILTL, LMVL…PVAM, VLTG…AGVI, and VFEQ…LIWL.

This sequence belongs to the major facilitator superfamily. Proton-dependent oligopeptide transporter (POT/PTR) (TC 2.A.17) family. DtpD subfamily.

It is found in the cell inner membrane. Its function is as follows. Probable proton-dependent permease that transports dipeptides. This chain is Dipeptide permease D, found in Salmonella choleraesuis (strain SC-B67).